The chain runs to 74 residues: Brevinin-2Tb (74 aa).

The first 22 residues, 1–22 (MFTMKKSLLLFFFLGTISLSLC), serve as a signal peptide directing secretion. The propeptide occupies 23 to 40 (QEERNADEDDGEMTEEEK). Cys68 and Cys74 are oxidised to a cystine.

Belongs to the frog skin active peptide (FSAP) family. Brevinin subfamily. Expressed by the skin glands.

It is found in the secreted. In terms of biological role, antimicrobial peptide. The polypeptide is Brevinin-2Tb (Rana temporaria (European common frog)).